The chain runs to 445 residues: Histidinol dehydrogenase (445 aa).

The NAD(+) site is built by Tyr-134, Gln-198, and Asn-226. The substrate site is built by Thr-249, Gln-271, and His-274. Residues Gln-271 and His-274 each contribute to the Zn(2+) site. Residues Glu-340 and His-341 each act as proton acceptor in the active site. Substrate-binding residues include His-341, Asp-374, Glu-428, and His-433. Asp-374 is a binding site for Zn(2+). His-433 is a binding site for Zn(2+).

It belongs to the histidinol dehydrogenase family. Zn(2+) serves as cofactor.

It catalyses the reaction L-histidinol + 2 NAD(+) + H2O = L-histidine + 2 NADH + 3 H(+). It functions in the pathway amino-acid biosynthesis; L-histidine biosynthesis; L-histidine from 5-phospho-alpha-D-ribose 1-diphosphate: step 9/9. Its function is as follows. Catalyzes the sequential NAD-dependent oxidations of L-histidinol to L-histidinaldehyde and then to L-histidine. This Nocardia farcinica (strain IFM 10152) protein is Histidinol dehydrogenase.